The primary structure comprises 23 residues: GIGKFLHSAKKFGKAFVGEIMNS.

In terms of tissue distribution, expressed by the skin glands.

The protein localises to the secreted. Its function is as follows. Antimicrobial peptide. This Xenopus ruwenzoriensis (Uganda clawed frog) protein is Magainin-R1.